The primary structure comprises 508 residues: UTP--glucose-1-phosphate uridylyltransferase (508 aa).

Ser2 is subject to Blocked amino end (Ser). A Phosphoserine modification is found at Ser13. Residues Leu113 to Gly116, Lys127, Gln190, and Gly222 each bind UTP. Gly115–Gly116 is a substrate binding site. Lys127 is a binding site for Mg(2+). Substrate contacts are provided by residues His223 and Asn251–Asp253. UTP is bound by residues Asp253 and Lys396. Mg(2+) is bound at residue Asp253. Lys396 is a catalytic residue. Position 426 is a phosphothreonine (Thr426). Residue Ser434 is modified to Phosphoserine. The residue at position 438 (Lys438) is an N6-acetyllysine. Phosphoserine is present on residues Ser448 and Ser461. Residues His457–His508 are oligomerization. The tract at residues Asn502–Leu503 is critical for end-to-end subunit interaction.

Belongs to the UDPGP type 1 family. As to quaternary structure, homooctamer.

The protein resides in the cytoplasm. It carries out the reaction alpha-D-glucose 1-phosphate + UTP + H(+) = UDP-alpha-D-glucose + diphosphate. It functions in the pathway glycan biosynthesis; glycogen biosynthesis. Functionally, UTP--glucose-1-phosphate uridylyltransferase catalyzing the conversion of glucose-1-phosphate into UDP-glucose, a crucial precursor for the production of glycogen. The protein is UTP--glucose-1-phosphate uridylyltransferase (UGP2) of Bos taurus (Bovine).